The sequence spans 83 residues: Mu-theraphotoxin-Hhn2j 3 (83 aa).

The signal sequence occupies residues 1 to 21 (MKALMFLALAGLVLLFVVGYA). Positions 22 to 48 (SESEEKEFPIELLSKIFAVDVFKGEER) are excised as a propeptide. 3 cysteine pairs are disulfide-bonded: Cys50–Cys65, Cys57–Cys70, and Cys64–Cys77. Leucine amide is present on Leu81.

The protein belongs to the neurotoxin 10 (Hwtx-1) family. 15 (Hntx-3) subfamily. As to quaternary structure, monomer. Expressed by the venom gland.

Its subcellular location is the secreted. Lethal neurotoxin. Selectively blocks tetrodotoxin-sensitive voltage-gated sodium channels (Nav). Does not affect tetrodotoxin-resistant voltage-gated sodium channels or calcium channels. In Cyriopagopus hainanus (Chinese bird spider), this protein is Mu-theraphotoxin-Hhn2j 3.